Reading from the N-terminus, the 749-residue chain is Homeobox-leucine zipper protein ROC7 (749 aa).

A disordered region spans residues 26-98 (LDQHQQHQHQ…KKRYHRHTQH (73 aa)). Basic and acidic residues predominate over residues 46–57 (SDGRAPRDELEM). Residues 68-79 (SGGGGGGGGSGG) show a composition bias toward gly residues. Residues 86–97 (RPRKKRYHRHTQ) show a composition bias toward basic residues. The segment at residues 88–147 (RKKRYHRHTQHQIQELEAFFKECPHPDDKQRKELSRELGLEPLQVKFWFQNKRTQMKTQH) is a DNA-binding region (homeobox). Residues 137–218 (QNKRTQMKTQ…DRISAIAAKY (82 aa)) adopt a coiled-coil conformation. An START domain is found at 256 to 494 (ADFDKPLVIE…LERQCERLAS (239 aa)).

Belongs to the HD-ZIP homeobox family. Class IV subfamily.

The protein resides in the nucleus. Functionally, probable transcription factor. This Oryza sativa subsp. japonica (Rice) protein is Homeobox-leucine zipper protein ROC7 (ROC7).